A 154-amino-acid chain; its full sequence is Transcriptional repressor NrdR (154 aa).

A zinc finger lies at 3-34 (CPFCSAHDTKVIDSRLVAEGDQVRRRRECQAC). One can recognise an ATP-cone domain in the interval 49–139 (PRVIKQDGSR…VYRRFQDLNE (91 aa)).

Belongs to the NrdR family. Zn(2+) is required as a cofactor.

Functionally, negatively regulates transcription of bacterial ribonucleotide reductase nrd genes and operons by binding to NrdR-boxes. This chain is Transcriptional repressor NrdR, found in Azotobacter vinelandii (strain DJ / ATCC BAA-1303).